A 98-amino-acid polypeptide reads, in one-letter code: Co-chaperonin GroES (98 aa).

This sequence belongs to the GroES chaperonin family. In terms of assembly, heptamer of 7 subunits arranged in a ring. Interacts with the chaperonin GroEL.

It is found in the cytoplasm. Functionally, together with the chaperonin GroEL, plays an essential role in assisting protein folding. The GroEL-GroES system forms a nano-cage that allows encapsulation of the non-native substrate proteins and provides a physical environment optimized to promote and accelerate protein folding. GroES binds to the apical surface of the GroEL ring, thereby capping the opening of the GroEL channel. The sequence is that of Co-chaperonin GroES from Clavibacter michiganensis subsp. michiganensis (strain NCPPB 382).